The chain runs to 459 residues: MVHERWKTVGSASQLEDRPRDKPQRASCSYVLCTVLLSLAVLLAVAVTGVVLFLNHTHTPGTAPPPIVSTGTAGANSALVTVERADSSHLSLLIDPRCPDLTDSFARLEGIQASILRALSEHQAQPRLDGAPELLDALADQLPRLLTRASELQAECAGLRKGHSLLGQGLSTLQSEQGRLIQLLSESQGHMAHLVNSVSDVLEALQRERGLGRPRVKADLQRAPSRGARPRGCANGSRPRDCLDVLLSGQQDDGVYSIFPTHYPAGFQVYCDMRTDGGGWTVFQRREDGSVNFFRGWEAYREGFGKLTGEHWLGLKRIHALTTQAAYELHVDLEDFDNGTAYAHYGSFGVGLFSVDPEEDGYPLTVADYSGTAGDSLLKHSGMRFTTKDRDSDHSENNCAAFYRGAWWYRNCHTSNLNGQYLRGAHASYADGVEWSSWTGWQYSLKFSEMKIRPVREDR.

The interval 1-22 (MVHERWKTVGSASQLEDRPRDK) is disordered. Over 1–33 (MVHERWKTVGSASQLEDRPRDKPQRASCSYVLC) the chain is Cytoplasmic. A helical; Signal-anchor for type II membrane protein membrane pass occupies residues 34 to 54 (TVLLSLAVLLAVAVTGVVLFL). At 55–459 (NHTHTPGTAP…MKIRPVREDR (405 aa)) the chain is on the extracellular side. Residues 233–456 (CANGSRPRDC…FSEMKIRPVR (224 aa)) enclose the Fibrinogen C-terminal domain. A disulfide bridge connects residues Cys242 and Cys271. Asn338 carries an N-linked (GlcNAc...) asparagine glycan. Ca(2+) is bound by residues Asp391 and Asp393. Cys399 and Cys412 are joined by a disulfide.

In terms of assembly, homotetramer; disulfide-linked.

The protein localises to the membrane. Its function is as follows. Acetyl group-binding receptor which shows a high-affinity and calcium-dependent binding to acetylated structures such as chitin, some N-acetylated carbohydrates, and amino acids, but not to their non-acetylated counterparts. Can facilitate the endocytosis of acetylated components. The chain is Fibrinogen C domain-containing protein 1 (Fibcd1) from Mus musculus (Mouse).